The sequence spans 361 residues: MKPSIYSLTRNDLIAWTIEHGEKKFRATQIWDWLYRKRVQSFEEMTNLSKDFIALLNENFLVNPLKQRIVQESADGTVKYLFELPDGMLIETVLMRQHYGLSVCVTTQVGCNIGCTFCASGLIKKQRDLNNGEITAQIMLVQKYFDERGQGERISHVVVMGIGEPFDNYDNVLKFLRTINDDNGLAIGARHITVSTSGLAHKIRDFANEGVQVNLAVSLHAPNNELRSSIMRINRSFPLEKLFAAIEYYIETTNRRVTFEYIMLNGVNDSPENAQELADLTKKIRKLSYVNLIPYNPVTEHDQYSRSPKERVDAFYDVLKKNGVNCVVRQEHGTDIDAACGQLRSNTMKRDREKATAGTAQ.

The Proton acceptor role is filled by Glu91. Residues Gln97–Asp335 enclose the Radical SAM core domain. An intrachain disulfide couples Cys104 to Cys340. [4Fe-4S] cluster-binding residues include Cys111, Cys115, and Cys118. S-adenosyl-L-methionine contacts are provided by residues Gly163–Glu164, Ser195, Ser218–His220, and Asn296. Catalysis depends on Cys340, which acts as the S-methylcysteine intermediate.

This sequence belongs to the radical SAM superfamily. RlmN family. It depends on [4Fe-4S] cluster as a cofactor.

It localises to the cytoplasm. The catalysed reaction is adenosine(2503) in 23S rRNA + 2 reduced [2Fe-2S]-[ferredoxin] + 2 S-adenosyl-L-methionine = 2-methyladenosine(2503) in 23S rRNA + 5'-deoxyadenosine + L-methionine + 2 oxidized [2Fe-2S]-[ferredoxin] + S-adenosyl-L-homocysteine. The enzyme catalyses adenosine(37) in tRNA + 2 reduced [2Fe-2S]-[ferredoxin] + 2 S-adenosyl-L-methionine = 2-methyladenosine(37) in tRNA + 5'-deoxyadenosine + L-methionine + 2 oxidized [2Fe-2S]-[ferredoxin] + S-adenosyl-L-homocysteine. In terms of biological role, specifically methylates position 2 of adenine 2503 in 23S rRNA and position 2 of adenine 37 in tRNAs. The chain is Probable dual-specificity RNA methyltransferase RlmN from Streptococcus mutans serotype c (strain ATCC 700610 / UA159).